The sequence spans 379 residues: Chaperone protein DnaJ (379 aa).

Residues 5–69 (DYYEVLGISK…NKRATIDQFG (65 aa)) form the J domain. A CR-type zinc finger spans residues 136-218 (GTTKEISIRK…CHGKGTENKT (83 aa)). Residues C149, C152, C166, C169, C192, C195, C206, and C209 each coordinate Zn(2+). CXXCXGXG motif repeat units follow at residues 149–156 (CETCHGDG), 166–173 (CSYCNGAG), 192–199 (CPKCNGSG), and 206–213 (CPTCHGKG).

Belongs to the DnaJ family. As to quaternary structure, homodimer. Zn(2+) serves as cofactor.

The protein localises to the cytoplasm. Its function is as follows. Participates actively in the response to hyperosmotic and heat shock by preventing the aggregation of stress-denatured proteins and by disaggregating proteins, also in an autonomous, DnaK-independent fashion. Unfolded proteins bind initially to DnaJ; upon interaction with the DnaJ-bound protein, DnaK hydrolyzes its bound ATP, resulting in the formation of a stable complex. GrpE releases ADP from DnaK; ATP binding to DnaK triggers the release of the substrate protein, thus completing the reaction cycle. Several rounds of ATP-dependent interactions between DnaJ, DnaK and GrpE are required for fully efficient folding. Also involved, together with DnaK and GrpE, in the DNA replication of plasmids through activation of initiation proteins. This is Chaperone protein DnaJ from Staphylococcus aureus.